The sequence spans 315 residues: 4-hydroxy-3-methylbut-2-enyl diphosphate reductase (315 aa).

Cysteine 12 is a [4Fe-4S] cluster binding site. Positions 43 and 81 each coordinate (2E)-4-hydroxy-3-methylbut-2-enyl diphosphate. Residues histidine 43 and histidine 81 each contribute to the dimethylallyl diphosphate site. Residues histidine 43 and histidine 81 each contribute to the isopentenyl diphosphate site. Residue cysteine 103 coordinates [4Fe-4S] cluster. Histidine 131 lines the (2E)-4-hydroxy-3-methylbut-2-enyl diphosphate pocket. Histidine 131 contacts dimethylallyl diphosphate. Isopentenyl diphosphate is bound at residue histidine 131. Catalysis depends on glutamate 133, which acts as the Proton donor. Threonine 170 serves as a coordination point for (2E)-4-hydroxy-3-methylbut-2-enyl diphosphate. Cysteine 198 lines the [4Fe-4S] cluster pocket. (2E)-4-hydroxy-3-methylbut-2-enyl diphosphate contacts are provided by serine 226, asparagine 228, and serine 271. 3 residues coordinate dimethylallyl diphosphate: serine 226, asparagine 228, and serine 271. The isopentenyl diphosphate site is built by serine 226, asparagine 228, and serine 271.

It belongs to the IspH family. [4Fe-4S] cluster is required as a cofactor.

It catalyses the reaction isopentenyl diphosphate + 2 oxidized [2Fe-2S]-[ferredoxin] + H2O = (2E)-4-hydroxy-3-methylbut-2-enyl diphosphate + 2 reduced [2Fe-2S]-[ferredoxin] + 2 H(+). It carries out the reaction dimethylallyl diphosphate + 2 oxidized [2Fe-2S]-[ferredoxin] + H2O = (2E)-4-hydroxy-3-methylbut-2-enyl diphosphate + 2 reduced [2Fe-2S]-[ferredoxin] + 2 H(+). It participates in isoprenoid biosynthesis; dimethylallyl diphosphate biosynthesis; dimethylallyl diphosphate from (2E)-4-hydroxy-3-methylbutenyl diphosphate: step 1/1. The protein operates within isoprenoid biosynthesis; isopentenyl diphosphate biosynthesis via DXP pathway; isopentenyl diphosphate from 1-deoxy-D-xylulose 5-phosphate: step 6/6. Functionally, catalyzes the conversion of 1-hydroxy-2-methyl-2-(E)-butenyl 4-diphosphate (HMBPP) into a mixture of isopentenyl diphosphate (IPP) and dimethylallyl diphosphate (DMAPP). Acts in the terminal step of the DOXP/MEP pathway for isoprenoid precursor biosynthesis. This is 4-hydroxy-3-methylbut-2-enyl diphosphate reductase from Geobacillus sp. (strain WCH70).